Consider the following 658-residue polypeptide: Probable Xaa-Pro aminopeptidase P (658 aa).

Mn(2+) is bound by residues Asp449, Asp460, Glu558, and Glu572.

This sequence belongs to the peptidase M24B family. Mn(2+) serves as cofactor.

The enzyme catalyses Release of any N-terminal amino acid, including proline, that is linked to proline, even from a dipeptide or tripeptide.. Functionally, catalyzes the removal of a penultimate prolyl residue from the N-termini of peptides. In Aspergillus clavatus (strain ATCC 1007 / CBS 513.65 / DSM 816 / NCTC 3887 / NRRL 1 / QM 1276 / 107), this protein is Probable Xaa-Pro aminopeptidase P (ampp).